Consider the following 277-residue polypeptide: uncharacterized protein (277 aa).

A run of 4 helical transmembrane segments spans residues 37-59, 63-82, 214-236, and 246-268; these read YLRY…LYIW, LIFG…PKVI, MLCG…KTYI, and WITS…TYLF.

It is found in the cell membrane. This is an uncharacterized protein from Bacillus anthracis.